The sequence spans 61 residues: Large ribosomal subunit protein uL30 (61 aa).

The protein belongs to the universal ribosomal protein uL30 family. Part of the 50S ribosomal subunit.

The sequence is that of Large ribosomal subunit protein uL30 from Thermobifida fusca (strain YX).